A 441-amino-acid chain; its full sequence is MSNVTHQPKIGFVSLGCPKNLVDSERILTELRTEGYDVVPTYDNADMVIVNTCGFIDSAVQESLEAIGEALKENGKVIVTGCLGAKEDQIREVHPKVLEITGPHSYEQVLEHVHHYSPKPKHNPFLSLVPEQGVKLTPRHYAYLKISEGCNHRCTFCIIPSMRGDLVSRPIGEVLAEAKRLADAGVKELLVISQDTSAYGVDVKHRTGFHNGMPVKTSMVSLCEELAKLGIWVRLHYVYPYPHVDDVIPLMAEGKILPYLDIPLQHASPRILKLMKRPGSADRQLARIKQWREICPDLTLRSTFIVGFPGETEEDFQMLLDFLKEARLDRVGCFKYSPVEGATANELADQVPEEVKEERWNRFMQLQQQISAERLQEKVGREILVLVDEVDEEGAIGRSMADAPEIDGAVYLNGETRVKPGDVVRVKVEHADEYDLWGTRV.

The region spanning 8-118 is the MTTase N-terminal domain; the sequence is PKIGFVSLGC…VLEHVHHYSP (111 aa). 6 residues coordinate [4Fe-4S] cluster: Cys17, Cys53, Cys82, Cys150, Cys154, and Cys157. In terms of domain architecture, Radical SAM core spans 136–373; the sequence is LTPRHYAYLK…MQLQQQISAE (238 aa). Residues 376–441 enclose the TRAM domain; sequence QEKVGREILV…DEYDLWGTRV (66 aa).

This sequence belongs to the methylthiotransferase family. RimO subfamily. Requires [4Fe-4S] cluster as cofactor.

The protein resides in the cytoplasm. It carries out the reaction L-aspartate(89)-[ribosomal protein uS12]-hydrogen + (sulfur carrier)-SH + AH2 + 2 S-adenosyl-L-methionine = 3-methylsulfanyl-L-aspartate(89)-[ribosomal protein uS12]-hydrogen + (sulfur carrier)-H + 5'-deoxyadenosine + L-methionine + A + S-adenosyl-L-homocysteine + 2 H(+). Its function is as follows. Catalyzes the methylthiolation of an aspartic acid residue of ribosomal protein uS12. The chain is Ribosomal protein uS12 methylthiotransferase RimO from Klebsiella pneumoniae (strain 342).